The primary structure comprises 179 residues: Large ribosomal subunit protein uL6 (179 aa).

This sequence belongs to the universal ribosomal protein uL6 family. In terms of assembly, part of the 50S ribosomal subunit.

Its function is as follows. This protein binds to the 23S rRNA, and is important in its secondary structure. It is located near the subunit interface in the base of the L7/L12 stalk, and near the tRNA binding site of the peptidyltransferase center. The polypeptide is Large ribosomal subunit protein uL6 (Syntrophobacter fumaroxidans (strain DSM 10017 / MPOB)).